The sequence spans 576 residues: 3-hydroxy-3-methylglutaryl coenzyme A reductase 1 (576 aa).

Residues 1 to 35 form a disordered region; that stretch reads MDSRRRPSKPLLTSSGEVLHRKQASPVTDEDQIHR. Helical transmembrane passes span 42–62 and 89–109; these read ALPL…FSVA and AIVS…IDFV. Glu255 serves as the catalytic Charge relay system. Residue Asn319 is glycosylated (N-linked (GlcNAc...) asparagine). Active-site charge relay system residues include Lys387 and Asp463. The helical transmembrane segment at 532–552 threads the bilayer; that stretch reads LLATIVAGSVLAGELSLMSAI. His561 functions as the Proton donor in the catalytic mechanism. Asn565 is a glycosylation site (N-linked (GlcNAc...) asparagine).

It belongs to the HMG-CoA reductase family. In terms of tissue distribution, expressed in trichomes, leaves, flowers, roots and stems.

It localises to the endoplasmic reticulum membrane. The protein resides in the plastid. The protein localises to the chloroplast membrane. Its subcellular location is the peroxisome membrane. The enzyme catalyses (R)-mevalonate + 2 NADP(+) + CoA = (3S)-3-hydroxy-3-methylglutaryl-CoA + 2 NADPH + 2 H(+). It functions in the pathway metabolic intermediate biosynthesis; (R)-mevalonate biosynthesis; (R)-mevalonate from acetyl-CoA: step 3/3. Catalyzes the synthesis of mevalonate, the specific precursor of all isoprenoid compounds present in plants. Component of the triterpene saponins (e.g. ginsenosides or panaxosides) and phytosterols biosynthetic pathways. Promotes triterpenes accumulation in roots. The protein is 3-hydroxy-3-methylglutaryl coenzyme A reductase 1 of Cannabis sativa (Hemp).